Reading from the N-terminus, the 608-residue chain is Elongation factor 4 (608 aa).

Residues Asp11–Lys193 form the tr-type G domain. GTP contacts are provided by residues Asp23–Thr28 and Asn140–Asp143.

Belongs to the TRAFAC class translation factor GTPase superfamily. Classic translation factor GTPase family. LepA subfamily.

Its subcellular location is the cell inner membrane. It carries out the reaction GTP + H2O = GDP + phosphate + H(+). Its function is as follows. Required for accurate and efficient protein synthesis under certain stress conditions. May act as a fidelity factor of the translation reaction, by catalyzing a one-codon backward translocation of tRNAs on improperly translocated ribosomes. Back-translocation proceeds from a post-translocation (POST) complex to a pre-translocation (PRE) complex, thus giving elongation factor G a second chance to translocate the tRNAs correctly. Binds to ribosomes in a GTP-dependent manner. The chain is Elongation factor 4 from Agrobacterium fabrum (strain C58 / ATCC 33970) (Agrobacterium tumefaciens (strain C58)).